A 1471-amino-acid polypeptide reads, in one-letter code: Myosin-4 (1471 aa).

Residues 4-57 (EVGTKCWYPHKEQGWIGGEVTKNDFFEGTFHLELKLEDGETVSIETNSFENDDD) enclose the Myosin N-terminal SH3-like domain. One can recognise a Myosin motor domain in the interval 71–777 (ESTDDLTTLS…MLAFLEKLRT (707 aa)). 165 to 172 (GESGAGKT) serves as a coordination point for ATP. An actin-binding region spans residues 647–669 (LGELMAIINSTNVHYIRCIKPNS). IQ domains are found at residues 781–801 (NEICIIIQKKIRARYYRLQYL), 804–824 (MESIKKCQSQIRSLLVRTRVD), 829–849 (TRAAILLQTNIRALWKREYYR), 876–898 (MLMAAVIIQSYIRSYGHKTDYRT), and 899–928 (LKRSSILVQSAMRMQLARRRYIVLQKEVEE). The stretch at 938–1063 (GLLEEAIEFK…LAFIENVIAQ (126 aa)) forms a coiled coil. The Dilute domain maps to 1164–1419 (SKVLLTVESI…LNYLANVIKR (256 aa)).

The protein belongs to the TRAFAC class myosin-kinesin ATPase superfamily. Myosin family. As to quaternary structure, interacts with SHE2 and SHE3.

The protein resides in the bud. Part of the mRNA localization machinery that restricts accumulation of certain proteins to the bud and in the daughter cell. Recruited to specific mRNAs including the ASH1 mRNA, coding for a repressor of the HO endonuclease, via its interaction with SHE3. This is Myosin-4 (MYO4) from Saccharomyces cerevisiae (strain ATCC 204508 / S288c) (Baker's yeast).